The sequence spans 54 residues: uncharacterized protein (54 aa).

Composition is skewed to basic and acidic residues over residues 1 to 19 (MTEKKQQNKPNENPEHNDL) and 26 to 54 (EELKENMNDEKHKRQQRDNSQSERDYDTK). The interval 1 to 54 (MTEKKQQNKPNENPEHNDLTDPIPNEELKENMNDEKHKRQQRDNSQSERDYDTK) is disordered.

This is an uncharacterized protein from Bacillus subtilis (strain 168).